Consider the following 327-residue polypeptide: Tryptophan--tRNA ligase (327 aa).

ATP is bound by residues 9-11 (RPT) and 17-18 (GN). A 'HIGH' region motif is present at residues 10-18 (PTGNLHLGN). Asp133 serves as a coordination point for L-tryptophan. Residues 145–147 (GKD), Val186, and 194–198 (KMGKS) contribute to the ATP site. A 'KMSKS' region motif is present at residues 194-198 (KMGKS).

It belongs to the class-I aminoacyl-tRNA synthetase family. In terms of assembly, homodimer.

Its subcellular location is the cytoplasm. The catalysed reaction is tRNA(Trp) + L-tryptophan + ATP = L-tryptophyl-tRNA(Trp) + AMP + diphosphate + H(+). Functionally, catalyzes the attachment of tryptophan to tRNA(Trp). This is Tryptophan--tRNA ligase from Porphyromonas gingivalis (strain ATCC BAA-308 / W83).